The sequence spans 308 residues: Homoserine kinase (308 aa).

95–105 (PQSRGLGSSAA) contacts ATP.

This sequence belongs to the GHMP kinase family. Homoserine kinase subfamily.

It is found in the cytoplasm. The catalysed reaction is L-homoserine + ATP = O-phospho-L-homoserine + ADP + H(+). The protein operates within amino-acid biosynthesis; L-threonine biosynthesis; L-threonine from L-aspartate: step 4/5. Catalyzes the ATP-dependent phosphorylation of L-homoserine to L-homoserine phosphate. This is Homoserine kinase from Corynebacterium jeikeium (strain K411).